Reading from the N-terminus, the 496-residue chain is Transactivator/viroplasmin protein (496 aa).

The tract at residues 102-128 is disordered; sequence RPNQGIQIPKKNEDHSSSSSKEEKGIQ. Residues 111-128 are compositionally biased toward basic and acidic residues; the sequence is KKNEDHSSSSSKEEKGIQ.

Belongs to the caulimoviridae viroplasmin family.

It localises to the host cytoplasm. Functionally, enhances the translation of downstream ORFs on polycistronic mRNAs derived from carnation etched ring virus. The polypeptide is Transactivator/viroplasmin protein (Dianthus caryophyllus (Carnation)).